We begin with the raw amino-acid sequence, 96 residues long: Large ribosomal subunit protein uL23 (96 aa).

This sequence belongs to the universal ribosomal protein uL23 family. Part of the 50S ribosomal subunit. Contacts protein L29, and trigger factor when it is bound to the ribosome.

Its function is as follows. One of the early assembly proteins it binds 23S rRNA. One of the proteins that surrounds the polypeptide exit tunnel on the outside of the ribosome. Forms the main docking site for trigger factor binding to the ribosome. This Endomicrobium trichonymphae protein is Large ribosomal subunit protein uL23.